Consider the following 156-residue polypeptide: Small ribosomal subunit protein uS7 (156 aa).

This sequence belongs to the universal ribosomal protein uS7 family. As to quaternary structure, part of the 30S ribosomal subunit. Contacts proteins S9 and S11.

One of the primary rRNA binding proteins, it binds directly to 16S rRNA where it nucleates assembly of the head domain of the 30S subunit. Is located at the subunit interface close to the decoding center, probably blocks exit of the E-site tRNA. The protein is Small ribosomal subunit protein uS7 of Lawsonia intracellularis (strain PHE/MN1-00).